A 70-amino-acid polypeptide reads, in one-letter code: Cytochrome c oxidase subunit 8B, mitochondrial (70 aa).

The N-terminal 24 residues, Met-1 to Arg-24, are a transit peptide targeting the mitochondrion. Over Ile-25–Ser-35 the chain is Mitochondrial matrix. Residues Ala-36 to Ser-59 traverse the membrane as a helical segment. Residues His-60 to Ala-70 are Mitochondrial intermembrane-facing.

It belongs to the cytochrome c oxidase VIII family. Component of the cytochrome c oxidase (complex IV, CIV), a multisubunit enzyme composed of 14 subunits. The complex is composed of a catalytic core of 3 subunits MT-CO1, MT-CO2 and MT-CO3, encoded in the mitochondrial DNA, and 11 supernumerary subunits COX4I, COX5A, COX5B, COX6A, COX6B, COX6C, COX7A, COX7B, COX7C, COX8 and NDUFA4, which are encoded in the nuclear genome. The complex exists as a monomer or a dimer and forms supercomplexes (SCs) in the inner mitochondrial membrane with NADH-ubiquinone oxidoreductase (complex I, CI) and ubiquinol-cytochrome c oxidoreductase (cytochrome b-c1 complex, complex III, CIII), resulting in different assemblies (supercomplex SCI(1)III(2)IV(1) and megacomplex MCI(2)III(2)IV(2)).

Its subcellular location is the mitochondrion inner membrane. The protein operates within energy metabolism; oxidative phosphorylation. Functionally, component of the cytochrome c oxidase, the last enzyme in the mitochondrial electron transport chain which drives oxidative phosphorylation. The respiratory chain contains 3 multisubunit complexes succinate dehydrogenase (complex II, CII), ubiquinol-cytochrome c oxidoreductase (cytochrome b-c1 complex, complex III, CIII) and cytochrome c oxidase (complex IV, CIV), that cooperate to transfer electrons derived from NADH and succinate to molecular oxygen, creating an electrochemical gradient over the inner membrane that drives transmembrane transport and the ATP synthase. Cytochrome c oxidase is the component of the respiratory chain that catalyzes the reduction of oxygen to water. Electrons originating from reduced cytochrome c in the intermembrane space (IMS) are transferred via the dinuclear copper A center (CU(A)) of subunit 2 and heme A of subunit 1 to the active site in subunit 1, a binuclear center (BNC) formed by heme A3 and copper B (CU(B)). The BNC reduces molecular oxygen to 2 water molecules using 4 electrons from cytochrome c in the IMS and 4 protons from the mitochondrial matrix. This chain is Cytochrome c oxidase subunit 8B, mitochondrial (Cox8b), found in Rattus norvegicus (Rat).